A 124-amino-acid polypeptide reads, in one-letter code: Small ribosomal subunit protein uS12 (124 aa).

Aspartate 89 bears the 3-methylthioaspartic acid mark.

Belongs to the universal ribosomal protein uS12 family. In terms of assembly, part of the 30S ribosomal subunit. Contacts proteins S8 and S17. May interact with IF1 in the 30S initiation complex.

In terms of biological role, with S4 and S5 plays an important role in translational accuracy. Its function is as follows. Interacts with and stabilizes bases of the 16S rRNA that are involved in tRNA selection in the A site and with the mRNA backbone. Located at the interface of the 30S and 50S subunits, it traverses the body of the 30S subunit contacting proteins on the other side and probably holding the rRNA structure together. The combined cluster of proteins S8, S12 and S17 appears to hold together the shoulder and platform of the 30S subunit. This is Small ribosomal subunit protein uS12 from Shewanella halifaxensis (strain HAW-EB4).